Here is a 289-residue protein sequence, read N- to C-terminus: ATP synthase gamma chain (289 aa).

It belongs to the ATPase gamma chain family. As to quaternary structure, F-type ATPases have 2 components, CF(1) - the catalytic core - and CF(0) - the membrane proton channel. CF(1) has five subunits: alpha(3), beta(3), gamma(1), delta(1), epsilon(1). CF(0) has three main subunits: a, b and c.

The protein localises to the cell inner membrane. Produces ATP from ADP in the presence of a proton gradient across the membrane. The gamma chain is believed to be important in regulating ATPase activity and the flow of protons through the CF(0) complex. In Azobacteroides pseudotrichonymphae genomovar. CFP2, this protein is ATP synthase gamma chain.